The primary structure comprises 64 residues: Large ribosomal subunit protein uL29 (64 aa).

This sequence belongs to the universal ribosomal protein uL29 family.

The protein is Large ribosomal subunit protein uL29 of Maridesulfovibrio salexigens (strain ATCC 14822 / DSM 2638 / NCIMB 8403 / VKM B-1763) (Desulfovibrio salexigens).